A 331-amino-acid polypeptide reads, in one-letter code: UPF0194 membrane protein YbhG (331 aa).

An N-terminal signal peptide occupies residues methionine 1 to alanine 15. Positions glutamate 107–alanine 208 form a coiled coil.

The protein belongs to the UPF0194 family.

Its subcellular location is the periplasm. The chain is UPF0194 membrane protein YbhG from Escherichia coli O157:H7 (strain EC4115 / EHEC).